Here is a 185-residue protein sequence, read N- to C-terminus: UPF0669 protein C6orf120 homolog (185 aa).

Residues 1-23 (MATPWRRALLMILASQVVTLVKC) form the signal peptide. Asn-47 is a glycosylation site (N-linked (GlcNAc...) asparagine).

It belongs to the UPF0669 family.

Its subcellular location is the secreted. Its function is as follows. May be involved in induction of apoptosis in CD4(+) T-cells, but not CD8(+) T-cells or hepatocytes. This Mus musculus (Mouse) protein is UPF0669 protein C6orf120 homolog.